The following is a 169-amino-acid chain: MSVLQVLHFPDERLRIVAKPVKEVNANIQRIVDDMFETMYAEEGIGLAATQVDIHQRIIVIDVSEDRDERLVLIDPELLEKSGETGIEEGCLSIPEQRALVPRAEKVKIRALDRDGNSFELEADGLLAICIQHEMDHLVGKLFIDYLSPMKRQRIRQKLEKLYRQSARD.

The Fe cation site is built by Cys91 and His133. Glu134 is a catalytic residue. A Fe cation-binding site is contributed by His137.

This sequence belongs to the polypeptide deformylase family. The cofactor is Fe(2+).

It catalyses the reaction N-terminal N-formyl-L-methionyl-[peptide] + H2O = N-terminal L-methionyl-[peptide] + formate. In terms of biological role, removes the formyl group from the N-terminal Met of newly synthesized proteins. Requires at least a dipeptide for an efficient rate of reaction. N-terminal L-methionine is a prerequisite for activity but the enzyme has broad specificity at other positions. The chain is Peptide deformylase from Erwinia tasmaniensis (strain DSM 17950 / CFBP 7177 / CIP 109463 / NCPPB 4357 / Et1/99).